A 309-amino-acid chain; its full sequence is Porphobilinogen deaminase (309 aa).

At cysteine 241 the chain carries S-(dipyrrolylmethanemethyl)cysteine.

Belongs to the HMBS family. In terms of assembly, monomer. Requires dipyrromethane as cofactor.

It catalyses the reaction 4 porphobilinogen + H2O = hydroxymethylbilane + 4 NH4(+). Its pathway is porphyrin-containing compound metabolism; protoporphyrin-IX biosynthesis; coproporphyrinogen-III from 5-aminolevulinate: step 2/4. In terms of biological role, tetrapolymerization of the monopyrrole PBG into the hydroxymethylbilane pre-uroporphyrinogen in several discrete steps. The sequence is that of Porphobilinogen deaminase from Desulforamulus reducens (strain ATCC BAA-1160 / DSM 100696 / MI-1) (Desulfotomaculum reducens).